The sequence spans 328 residues: MLNEFPIFDYEDIQLIPNKCVIKSRAEADTSVTLGNHTFKLPVVPANMQTILDENVAEQLAKGGYFYIMHRFDEAGRIPFIKRMHNQGLIASISVGVKDYEYDFVSQLKADTPEYITIDIAHGHADSVISMIQHIKKELPDTFVIAGNVGTPEAVRELENAGADATKVGIGPGKVCITKVKTGFGTGGWQLAALRWCAKAARKPIIADGGIRTHGDIAKSIRFGASMIMIGSLFAGHIESPGKTIEVDGEQFKEYYGSASQYQKGAYKNVEGKRILLPAKGHLQDTLTEMEQDLQSAISYAGGRQVADLKHVDYVIVKNSIWNGDASH.

C176 serves as the catalytic Thioimidate intermediate. Position 205-228 (205-228) interacts with NADP(+); it reads IIADGGIRTHGDIAKSIRFGASMI.

The protein belongs to the IMPDH/GMPR family. GuaC type 2 subfamily.

It carries out the reaction IMP + NH4(+) + NADP(+) = GMP + NADPH + 2 H(+). Its function is as follows. Catalyzes the irreversible NADPH-dependent deamination of GMP to IMP. It functions in the conversion of nucleobase, nucleoside and nucleotide derivatives of G to A nucleotides, and in maintaining the intracellular balance of A and G nucleotides. The sequence is that of GMP reductase from Streptococcus pneumoniae serotype 4 (strain ATCC BAA-334 / TIGR4).